Here is a 271-residue protein sequence, read N- to C-terminus: Zinc finger CCHC domain-containing protein 9 (271 aa).

Residues 1–40 are disordered; that stretch reads MTRWARVSTTYNKRPLPATSWEDMKKGSFEGTSQNLPKRK. Serine 48 carries the post-translational modification Phosphoserine. CCHC-type zinc fingers lie at residues 128–145, 155–172, 184–201, and 211–228; these read MVCF…DCPA, GICY…KCKA, AKCF…SCPD, and GGCK…DCPE.

It is found in the nucleus. The protein localises to the nucleolus. In terms of biological role, may down-regulate transcription mediated by NF-kappa-B and the serum response element. This is Zinc finger CCHC domain-containing protein 9 (ZCCHC9) from Homo sapiens (Human).